The chain runs to 137 residues: Large-conductance mechanosensitive channel (137 aa).

2 helical membrane passes run 10 to 30 (FAMR…AAFG) and 76 to 96 (GTFI…FSAV).

Belongs to the MscL family. Homopentamer.

It is found in the cell inner membrane. Channel that opens in response to stretch forces in the membrane lipid bilayer. May participate in the regulation of osmotic pressure changes within the cell. The polypeptide is Large-conductance mechanosensitive channel (Yersinia pseudotuberculosis serotype O:1b (strain IP 31758)).